The following is a 49-amino-acid chain: Single-stranded DNA-binding protein (49 aa).

In terms of assembly, homodimer in the absence of DNA, monomer when binding DNA.

Functionally, binds preferentially to single-stranded DNA and therefore, destabilizes double-stranded DNA. It is involved in DNA replication, repair and recombination. Binds ss-DNA as the replication fork advances and stimulates the replisome processivity and accuracy. The chain is Single-stranded DNA-binding protein (32) from Escherichia coli (Bacteriophage RB32).